Here is a 186-residue protein sequence, read N- to C-terminus: Putative 5'(3')-deoxyribonucleotidase (186 aa).

The Nucleophile role is filled by Asp6. Asp6, Asp8, and Asp137 together coordinate Mg(2+). Asp8 (proton donor) is an active-site residue.

Belongs to the 5'(3')-deoxyribonucleotidase family. Requires Mg(2+) as cofactor.

Functionally, dephosphorylates the 5' and 2'(3')-phosphates of deoxyribonucleotides. The polypeptide is Putative 5'(3')-deoxyribonucleotidase (Bordetella pertussis (strain Tohama I / ATCC BAA-589 / NCTC 13251)).